The primary structure comprises 220 residues: Urease accessory protein UreF (220 aa).

The protein belongs to the UreF family. UreD, UreF and UreG form a complex that acts as a GTP-hydrolysis-dependent molecular chaperone, activating the urease apoprotein by helping to assemble the nickel containing metallocenter of UreC. The UreE protein probably delivers the nickel.

It is found in the cytoplasm. Its function is as follows. Required for maturation of urease via the functional incorporation of the urease nickel metallocenter. The protein is Urease accessory protein UreF of Bordetella parapertussis (strain 12822 / ATCC BAA-587 / NCTC 13253).